Reading from the N-terminus, the 492-residue chain is MANHPLSSSRSNRPFFVRSLAGHTSNLIIPDEFFTAHLEGKTGLTKLKLTSDASDRIWDVRLNGRRFAGGWDDFSAAHCLRDDDVLVFRLDVKMVFHVTPSGRSFSQIRTSSSSGDYDSDDDDDEAGDDDSDSKNISLKKKSRFEAESSSSEKYCLLGLTASNLRLNRVSFTKHFSRANGLTKRCCMIDLMNLSGESWTLGLRHNKRTGQAFIRGRWRSFCHANELKPGSFYRFKLVRNGTRPLLQLCFKVIPQGNCSNSKANGKANVSEKYSREDGSASTKQNKFLTVTLKHYMIQSGQLRLRRSFVRENGIKEAEEIILVDKNGVEWPSYVSSSKQRREFYMAHGWIRFCEANKLKTGETFTLEFVRGEGTTPMLKFCSEAKIEQEEAPEERGTPLPKRARVSAEVGHSRRTQAPNKSSDDPKILQRKQPLQPCSFSDQAKKVKQSIVNILTGIKRFRSELELKERNLEAALLEIDALGDKVSEINKILK.

The TF-B3 1 DNA-binding region spans 12 to 104 (NRPFFVRSLA…VFHVTPSGRS (93 aa)). A compositionally biased stretch (low complexity) spans 105 to 116 (FSQIRTSSSSGD). The segment at 105 to 134 (FSQIRTSSSSGDYDSDDDDDEAGDDDSDSK) is disordered. The segment covering 117-131 (YDSDDDDDEAGDDDS) has biased composition (acidic residues). DNA-binding regions (TF-B3) lie at residues 154–250 (YCLL…LCFK) and 286–382 (FLTV…FCSE). A compositionally biased stretch (basic and acidic residues) spans 385–395 (IEQEEAPEERG). A disordered region spans residues 385–427 (IEQEEAPEERGTPLPKRARVSAEVGHSRRTQAPNKSSDDPKIL).

It localises to the nucleus. This Arabidopsis thaliana (Mouse-ear cress) protein is B3 domain-containing protein REM3 (REM3).